A 214-amino-acid polypeptide reads, in one-letter code: Nascent polypeptide-associated complex subunit alpha (214 aa).

The segment at 1-80 (MPGEATETVP…SEKKARKAMS (80 aa)) is disordered. A compositionally biased stretch (acidic residues) spans 29–40 (SDSDDSPPELEQ). Low complexity predominate over residues 41–56 (DSTQTTTQQAQLAAAA). An NAC-A/B domain is found at 69-134 (SRSEKKARKA…AKIEDLSQQA (66 aa)). The region spanning 175 to 212 (VEVKDIELVMSQANVSRAKAVRALKNNSNDIVNAIMEL) is the UBA domain.

Belongs to the NAC-alpha family.

May promote appropriate targeting of ribosome-nascent polypeptide complexes. This Xenopus tropicalis (Western clawed frog) protein is Nascent polypeptide-associated complex subunit alpha (naca).